A 123-amino-acid polypeptide reads, in one-letter code: Small ribosomal subunit protein uS12 (123 aa).

Residues 1–32 (MPTINQLIRKPREAQKARDKAPALQSSPQKRG) are disordered. Over residues 10–21 (KPREAQKARDKA) the composition is skewed to basic and acidic residues. Asp89 bears the 3-methylthioaspartic acid mark.

Belongs to the universal ribosomal protein uS12 family. In terms of assembly, part of the 30S ribosomal subunit. Contacts proteins S8 and S17. May interact with IF1 in the 30S initiation complex.

With S4 and S5 plays an important role in translational accuracy. Functionally, interacts with and stabilizes bases of the 16S rRNA that are involved in tRNA selection in the A site and with the mRNA backbone. Located at the interface of the 30S and 50S subunits, it traverses the body of the 30S subunit contacting proteins on the other side and probably holding the rRNA structure together. The combined cluster of proteins S8, S12 and S17 appears to hold together the shoulder and platform of the 30S subunit. The polypeptide is Small ribosomal subunit protein uS12 (Azorhizobium caulinodans (strain ATCC 43989 / DSM 5975 / JCM 20966 / LMG 6465 / NBRC 14845 / NCIMB 13405 / ORS 571)).